The following is a 669-amino-acid chain: JmjC domain-containing histone demethylation protein 1 (669 aa).

Residues 1 to 61 are disordered; that stretch reads MTAVAASSRV…RRKKPRTELV (61 aa). 2 stretches are compositionally biased toward polar residues: residues 16 to 27 and 36 to 49; these read ASSSAHPRTLRS and HDSS…QSKQ. The segment at 65 to 126 adopts a PHD-type zinc-finger fold; that stretch reads ELDCAACPAV…KWYCQPCITR (62 aa). Disordered regions lie at residues 131–150 and 220–256; these read FESG…RPPR and PPDR…QATH. The segment covering 246–255 has biased composition (basic residues); that stretch reads KPARAKKQAT. In terms of domain architecture, JmjC spans 332–494; that stretch reads VTGTPMQAYV…TQWKLVEIEE (163 aa). Residues histidine 390 and aspartate 392 each contribute to the Fe cation site. Lysine 407 contacts substrate. Histidine 462 lines the Fe cation pocket.

Belongs to the JHDM1 histone demethylase family. Fe(2+) serves as cofactor.

Its subcellular location is the nucleus. The enzyme catalyses N(6),N(6)-dimethyl-L-lysyl(36)-[histone H3] + 2 2-oxoglutarate + 2 O2 = L-lysyl(36)-[histone H3] + 2 formaldehyde + 2 succinate + 2 CO2. Functionally, histone demethylase that specifically demethylates 'Lys-36' of histone H3, thereby playing a central role in histone code. This Mycosarcoma maydis (Corn smut fungus) protein is JmjC domain-containing histone demethylation protein 1 (JHD1).